The primary structure comprises 397 residues: Diphosphomevalonate decarboxylase (397 aa).

Residues 19 to 22, Arg-74, 153 to 158, and Thr-209 each bind (R)-5-diphosphomevalonate; these read YWGK and SGSACR. The disordered stretch occupies residues 378-397; that stretch reads GPGPQDTKSSLIDPETGLPR.

This sequence belongs to the diphosphomevalonate decarboxylase family. As to quaternary structure, homodimer.

It catalyses the reaction (R)-5-diphosphomevalonate + ATP = isopentenyl diphosphate + ADP + phosphate + CO2. Its pathway is isoprenoid biosynthesis; isopentenyl diphosphate biosynthesis via mevalonate pathway; isopentenyl diphosphate from (R)-mevalonate: step 3/3. Its function is as follows. Diphosphomevalonate decarboxylase; part of the second module of ergosterol biosynthesis pathway that includes the middle steps of the pathway. The second module is carried out in the vacuole and involves the formation of farnesyl diphosphate, which is also an important intermediate in the biosynthesis of ubiquinone, dolichol, heme and prenylated proteins. Activity by the mevalonate kinase ERG12 first converts mevalonate into 5-phosphomevalonate. 5-phosphomevalonate is then further converted to 5-diphosphomevalonate by the phosphomevalonate kinase ERG8. The diphosphomevalonate decarboxylase MVD1/ERG19 then produces isopentenyl diphosphate. The isopentenyl-diphosphate delta-isomerase IDI1 then catalyzes the 1,3-allylic rearrangement of the homoallylic substrate isopentenyl (IPP) to its highly electrophilic allylic isomer, dimethylallyl diphosphate (DMAPP). Finally the farnesyl diphosphate synthase ERG20 catalyzes the sequential condensation of isopentenyl pyrophosphate with dimethylallyl pyrophosphate, and then with the resultant geranylpyrophosphate to the ultimate product farnesyl pyrophosphate. The polypeptide is Diphosphomevalonate decarboxylase (Eremothecium gossypii (strain ATCC 10895 / CBS 109.51 / FGSC 9923 / NRRL Y-1056) (Yeast)).